The primary structure comprises 232 residues: uncharacterized protein (232 aa).

Transmembrane regions (helical) follow at residues 4-24 (LLGVFFVPIIPFSFVVDYVFE), 42-62 (VLVGALGVGKAGTLLILLAVL), 100-120 (LFFISAFAIPLTVIHFLILHM), 145-165 (LAFVALVSSLVIAPAYAFFTL), and 171-191 (GNLILTPILLIEWLVWLWVGF).

It localises to the cell membrane. This is an uncharacterized protein from Aquifex aeolicus (strain VF5).